Here is a 223-residue protein sequence, read N- to C-terminus: Urease accessory protein UreG (223 aa).

Residues 1–31 (MAKHSHDHTHDHHDRPRRVRKPGEPLRIGVG) form a disordered region. 32–39 (GPVGSGKT) is a binding site for GTP.

Belongs to the SIMIBI class G3E GTPase family. UreG subfamily. In terms of assembly, homodimer. UreD, UreF and UreG form a complex that acts as a GTP-hydrolysis-dependent molecular chaperone, activating the urease apoprotein by helping to assemble the nickel containing metallocenter of UreC. The UreE protein probably delivers the nickel.

Its subcellular location is the cytoplasm. Facilitates the functional incorporation of the urease nickel metallocenter. This process requires GTP hydrolysis, probably effectuated by UreG. This chain is Urease accessory protein UreG, found in Mycobacterium marinum (strain ATCC BAA-535 / M).